The chain runs to 202 residues: Ion-translocating oxidoreductase complex subunit G (202 aa).

The helical transmembrane segment at 11 to 31 (AILLALIALICTALSTGIYLL) threads the bilayer. An FMN phosphoryl threonine modification is found at T177.

The protein belongs to the RnfG family. In terms of assembly, the complex is composed of six subunits: RnfA, RnfB, RnfC, RnfD, RnfE and RnfG. FMN serves as cofactor.

The protein resides in the cell inner membrane. Part of a membrane-bound complex that couples electron transfer with translocation of ions across the membrane. In Pasteurella multocida (strain Pm70), this protein is Ion-translocating oxidoreductase complex subunit G.